The following is a 388-amino-acid chain: Glutamate 5-kinase (388 aa).

Lysine 21 contacts ATP. Substrate is bound by residues serine 61, aspartate 148, and asparagine 160. ATP is bound by residues 180–181 (TD) and 222–228 (TGGMITK). The PUA domain maps to 285–363 (RGSVFLDPGA…RWLARELGAE (79 aa)).

It belongs to the glutamate 5-kinase family.

The protein resides in the cytoplasm. It catalyses the reaction L-glutamate + ATP = L-glutamyl 5-phosphate + ADP. It participates in amino-acid biosynthesis; L-proline biosynthesis; L-glutamate 5-semialdehyde from L-glutamate: step 1/2. Functionally, catalyzes the transfer of a phosphate group to glutamate to form L-glutamate 5-phosphate. This Thermobifida fusca (strain YX) protein is Glutamate 5-kinase.